The chain runs to 160 residues: Transcriptional repressor NrdR (160 aa).

The segment covering M1–T11 has biased composition (polar residues). The disordered stretch occupies residues M1 to E20. Residues C3–C34 fold into a zinc finger. In terms of domain architecture, ATP-cone spans L49–D139.

It belongs to the NrdR family. Requires Zn(2+) as cofactor.

Functionally, negatively regulates transcription of bacterial ribonucleotide reductase nrd genes and operons by binding to NrdR-boxes. This chain is Transcriptional repressor NrdR, found in Rhodopseudomonas palustris (strain ATCC BAA-98 / CGA009).